Consider the following 358-residue polypeptide: DNA polymerase IV (358 aa).

The UmuC domain occupies Ile-6 to Gly-187. Residues Asp-10 and Asp-105 each coordinate Mg(2+). Residue Glu-106 is part of the active site.

The protein belongs to the DNA polymerase type-Y family. Monomer. It depends on Mg(2+) as a cofactor.

It is found in the cytoplasm. The enzyme catalyses DNA(n) + a 2'-deoxyribonucleoside 5'-triphosphate = DNA(n+1) + diphosphate. Its function is as follows. Poorly processive, error-prone DNA polymerase involved in untargeted mutagenesis. Copies undamaged DNA at stalled replication forks, which arise in vivo from mismatched or misaligned primer ends. These misaligned primers can be extended by PolIV. Exhibits no 3'-5' exonuclease (proofreading) activity. May be involved in translesional synthesis, in conjunction with the beta clamp from PolIII. The protein is DNA polymerase IV of Staphylococcus haemolyticus (strain JCSC1435).